Reading from the N-terminus, the 147-residue chain is Large ribosomal subunit protein uL16 (147 aa).

It belongs to the universal ribosomal protein uL16 family. As to quaternary structure, part of the 50S ribosomal subunit.

Functionally, binds 23S rRNA and is also seen to make contacts with the A and possibly P site tRNAs. In Clostridium tetani (strain Massachusetts / E88), this protein is Large ribosomal subunit protein uL16.